The primary structure comprises 224 residues: Ribosome maturation factor RimM (224 aa).

Over residues 1-12 (MARRPGSSSRGP) the composition is skewed to low complexity. Disordered stretches follow at residues 1 to 46 (MARR…PSLV) and 204 to 224 (VADP…DDPG). Residues 137–211 (EDEFFLTDLI…KVVADPPEDL (75 aa)) form the PRC barrel domain.

This sequence belongs to the RimM family. In terms of assembly, binds ribosomal protein uS19.

Its subcellular location is the cytoplasm. In terms of biological role, an accessory protein needed during the final step in the assembly of 30S ribosomal subunit, possibly for assembly of the head region. Essential for efficient processing of 16S rRNA. May be needed both before and after RbfA during the maturation of 16S rRNA. It has affinity for free ribosomal 30S subunits but not for 70S ribosomes. This Methylorubrum populi (strain ATCC BAA-705 / NCIMB 13946 / BJ001) (Methylobacterium populi) protein is Ribosome maturation factor RimM.